The chain runs to 290 residues: Small ribosomal subunit protein uS11 (290 aa).

The segment at 243 to 271 (DWEAAPAGFPATGEWSDAAPGAAAPNWDA) is disordered. Residues 257 to 271 (WSDAAPGAAAPNWDA) show a composition bias toward low complexity.

The protein belongs to the universal ribosomal protein uS2 family. As to quaternary structure, component of the small ribosomal subunit (SSU). Mature N.crassa ribosomes consist of a small (40S) and a large (60S) subunit. The 40S small subunit contains 1 molecule of ribosomal RNA (18S rRNA) and at least 32 different proteins. The large 60S subunit contains 3 rRNA molecules (26S, 5.8S and 5S rRNA) and at least 42 different proteins. Interacts with rps21.

The protein localises to the cytoplasm. Its function is as follows. Component of the ribosome, a large ribonucleoprotein complex responsible for the synthesis of proteins in the cell. The small ribosomal subunit (SSU) binds messenger RNAs (mRNAs) and translates the encoded message by selecting cognate aminoacyl-transfer RNA (tRNA) molecules. The large subunit (LSU) contains the ribosomal catalytic site termed the peptidyl transferase center (PTC), which catalyzes the formation of peptide bonds, thereby polymerizing the amino acids delivered by tRNAs into a polypeptide chain. The nascent polypeptides leave the ribosome through a tunnel in the LSU and interact with protein factors that function in enzymatic processing, targeting, and the membrane insertion of nascent chains at the exit of the ribosomal tunnel. uS2 is required for the assembly and/or stability of the 40S ribosomal subunit. Required for the processing of the 20S rRNA-precursor to mature 18S rRNA in a late step of the maturation of 40S ribosomal subunits. The sequence is that of Small ribosomal subunit protein uS11 from Neurospora crassa (strain ATCC 24698 / 74-OR23-1A / CBS 708.71 / DSM 1257 / FGSC 987).